A 379-amino-acid polypeptide reads, in one-letter code: Gonadotropin-releasing hormone II receptor (379 aa).

Residues 1–40 (MSAGNGTPWGSAAGEESWAASGVAVEGSELPTFSAAAKVR) lie on the Extracellular side of the membrane. The helical transmembrane segment at 41–60 (VGVTIVLFVSSAGGNLAVLW) threads the bilayer. Topologically, residues 61-76 (SVTRPQPSQLRPSPVR) are cytoplasmic. The helical transmembrane segment at 77 to 96 (TLFAHLAAADLLVTFVVMPL) threads the bilayer. At 97-114 (DATWNITVQWLAEDIACR) the chain is on the extracellular side. Residue Asn-101 is glycosylated (N-linked (GlcNAc...) asparagine). A disulfide bridge connects residues Cys-113 and Cys-188. The chain crosses the membrane as a helical span at residues 115–136 (TLMFLKLMAMYSAAFLPVVIGL). Residues 137–160 (DRQAAVLNPLGSRSGVRKLLGAAW) are Cytoplasmic-facing. The helical transmembrane segment at 161 to 178 (GLSFLLALPQLFLFHTVH) threads the bilayer. At 179-204 (RAGPVPFTQCVTKGSFKARWQETTYN) the chain is on the extracellular side. The chain crosses the membrane as a helical span at residues 205-224 (LFTFRCLFLLPLTAMAICYS). Residues 225 to 278 (HIVLSVSSPQTRKGSHAPAGEFALCRSFDNCPRVRLWALRLALLILLTFILCWT) lie on the Cytoplasmic side of the membrane. The helical transmembrane segment at 279 to 297 (PYYLLGLWYWFSPTMLTEV) threads the bilayer. The Extracellular segment spans residues 298 to 303 (PPSLSH). Residues 304 to 323 (ILFLFGLLNAPLDPLLYGAF) form a helical membrane-spanning segment. Over 324 to 379 (TLGCQRGHQELSIDSSNEGSGRMLQQEIHALRQQEVQKTVTSRSAGETKDISITSI) the chain is Cytoplasmic.

This sequence belongs to the G-protein coupled receptor 1 family. Phosphorylated on the C-terminal cytoplasmic tail.

The protein resides in the cell membrane. Receptor for gonadotropin releasing hormone II (GnRH II). This receptor mediates its action by association with G proteins that activate a phosphatidylinositol-calcium second messenger system. The sequence is that of Gonadotropin-releasing hormone II receptor (GNRHR2) from Macaca mulatta (Rhesus macaque).